We begin with the raw amino-acid sequence, 297 residues long: Probable endonuclease 4 (297 aa).

9 residues coordinate Zn(2+): H69, H110, E145, D179, H182, H214, D227, H229, and E259.

Belongs to the AP endonuclease 2 family. The cofactor is Zn(2+).

The enzyme catalyses Endonucleolytic cleavage to 5'-phosphooligonucleotide end-products.. Endonuclease IV plays a role in DNA repair. It cleaves phosphodiester bonds at apurinic or apyrimidinic (AP) sites, generating a 3'-hydroxyl group and a 5'-terminal sugar phosphate. This chain is Probable endonuclease 4, found in Listeria monocytogenes serotype 4b (strain CLIP80459).